The sequence spans 291 residues: Homoserine kinase (291 aa).

Residue 79–89 participates in ATP binding; the sequence is PLARGLGSSSA.

The protein belongs to the GHMP kinase family. Homoserine kinase subfamily.

It localises to the cytoplasm. The enzyme catalyses L-homoserine + ATP = O-phospho-L-homoserine + ADP + H(+). It functions in the pathway amino-acid biosynthesis; L-threonine biosynthesis; L-threonine from L-aspartate: step 4/5. Its function is as follows. Catalyzes the ATP-dependent phosphorylation of L-homoserine to L-homoserine phosphate. The protein is Homoserine kinase of Leuconostoc citreum (strain KM20).